An 875-amino-acid chain; its full sequence is Probable serine/threonine-protein kinase samkC (875 aa).

Residues 1–12 show a composition bias toward polar residues; sequence METTTITSILDD. A disordered region spans residues 1 to 47; the sequence is METTTITSILDDNNNNNNNNNNNNNNNNNNNNNNNNNNNNNNNNNYN. Residues 13-45 are compositionally biased toward low complexity; sequence NNNNNNNNNNNNNNNNNNNNNNNNNNNNNNNNN. An SAM domain is found at 51 to 116; the sequence is WDNEMVCKWL…SEFDDLKNIF (66 aa). A coiled-coil region spans residues 135–162; sequence DNNNLNNLNNNNNNNNNNNNNNNNNNNN. The segment covering 136 to 168 has biased composition (low complexity); that stretch reads NNNLNNLNNNNNNNNNNNNNNNNNNNNNNNNNN. A disordered region spans residues 136–170; it reads NNNLNNLNNNNNNNNNNNNNNNNNNNNNNNNNNKT. A Protein kinase domain is found at 181–452; it reads YVFIKQMKGS…SKQLLNFSWF (272 aa). ATP contacts are provided by residues 187-195 and Lys-210; that span reads MKGSVNCSL. The Proton acceptor role is filled by Asp-301. Disordered stretches follow at residues 331–362 and 461–718; these read NNND…NDTN and SEPQ…NNNN. Low complexity predominate over residues 474–554; the sequence is PQTSQSKPKP…KPKPSSSLSS (81 aa). Pro residues predominate over residues 555–564; sequence EPPPLEPQPK. Low complexity-rich tracts occupy residues 565 to 581, 589 to 611, and 617 to 653; these read PQTS…LSSS, QPTQ…SQPT, and QPKS…QQQK. Residues 626 to 655 are a coiled coil; that stretch reads QSKQQQQQQQQQQQQQQQQQQQQQQQQKSK. Residues 654 to 663 show a composition bias toward basic and acidic residues; the sequence is SKPEQSKSKP. Residues 664–718 show a composition bias toward low complexity; sequence EQSQSKPQPGQPLQSPSKPQPIPSTTKTTTTTTTTTTPNNNNNNNNNNNNNNNNN. The chain crosses the membrane as a helical span at residues 842–862; sequence TLILYTFYYFLSNTLIYQIIL.

It belongs to the protein kinase superfamily. Ser/Thr protein kinase family.

The protein localises to the membrane. It catalyses the reaction L-seryl-[protein] + ATP = O-phospho-L-seryl-[protein] + ADP + H(+). The catalysed reaction is L-threonyl-[protein] + ATP = O-phospho-L-threonyl-[protein] + ADP + H(+). This is Probable serine/threonine-protein kinase samkC (samkC) from Dictyostelium discoideum (Social amoeba).